The sequence spans 282 residues: ATP synthase gamma chain (282 aa).

Belongs to the ATPase gamma chain family. F-type ATPases have 2 components, CF(1) - the catalytic core - and CF(0) - the membrane proton channel. CF(1) has five subunits: alpha(3), beta(3), gamma(1), delta(1), epsilon(1). CF(0) has three main subunits: a, b and c.

It is found in the cell membrane. Its function is as follows. Produces ATP from ADP in the presence of a proton gradient across the membrane. The gamma chain is believed to be important in regulating ATPase activity and the flow of protons through the CF(0) complex. The sequence is that of ATP synthase gamma chain from Clostridium botulinum (strain Loch Maree / Type A3).